The following is a 204-amino-acid chain: Ribosomal RNA small subunit methyltransferase G (204 aa).

S-adenosyl-L-methionine is bound by residues Gly74, Leu79, 125–126, and Arg138; that span reads AY.

This sequence belongs to the methyltransferase superfamily. RNA methyltransferase RsmG family.

It is found in the cytoplasm. Functionally, specifically methylates the N7 position of a guanine in 16S rRNA. The polypeptide is Ribosomal RNA small subunit methyltransferase G (Brachyspira hyodysenteriae (strain ATCC 49526 / WA1)).